The primary structure comprises 622 residues: Probable potassium transport system protein Kup 1 (622 aa).

A run of 12 helical transmembrane segments spans residues 11 to 31, 50 to 70, 101 to 121, 137 to 157, 168 to 188, 215 to 235, 247 to 267, 285 to 305, 337 to 357, 366 to 386, 393 to 413, and 419 to 439; these read LTLG…LYAV, ILSI…VTLV, VLLL…VITP, PAFN…LFWV, FFGP…VAQI, FIIL…YADL, WFAV…ALLL, ALLP…QALI, IYLP…VMIF, AYGI…FFVI, PLWL…AFWA, and LFDG…LMIT.

It belongs to the HAK/KUP transporter (TC 2.A.72) family.

It is found in the cell inner membrane. The catalysed reaction is K(+)(in) + H(+)(in) = K(+)(out) + H(+)(out). Transport of potassium into the cell. Likely operates as a K(+):H(+) symporter. This is Probable potassium transport system protein Kup 1 from Albidiferax ferrireducens (strain ATCC BAA-621 / DSM 15236 / T118) (Rhodoferax ferrireducens).